The following is a 120-amino-acid chain: MSYILGTNLNSNKQVKIALTRIFGIGPKKAIQVCDQLGLSDTIKVNKLTKYQFDQILKIISQNYLVDSELKRVIQRDIKRLISIGCYRGFRHNAGLPLRGQRTHTNAKTCRKLRYVSIRS.

This sequence belongs to the universal ribosomal protein uS13 family. Part of the small ribosomal subunit.

Its subcellular location is the mitochondrion. Located at the top of the head of the small subunit, it contacts several helices of the 18S rRNA. The sequence is that of Small ribosomal subunit protein uS13m (RPS13) from Marchantia polymorpha (Common liverwort).